The primary structure comprises 158 residues: NAD(P)H-quinone oxidoreductase subunit J, chloroplastic (158 aa).

Belongs to the complex I 30 kDa subunit family. In terms of assembly, NDH is composed of at least 16 different subunits, 5 of which are encoded in the nucleus.

The protein resides in the plastid. Its subcellular location is the chloroplast thylakoid membrane. The enzyme catalyses a plastoquinone + NADH + (n+1) H(+)(in) = a plastoquinol + NAD(+) + n H(+)(out). It carries out the reaction a plastoquinone + NADPH + (n+1) H(+)(in) = a plastoquinol + NADP(+) + n H(+)(out). Its function is as follows. NDH shuttles electrons from NAD(P)H:plastoquinone, via FMN and iron-sulfur (Fe-S) centers, to quinones in the photosynthetic chain and possibly in a chloroplast respiratory chain. The immediate electron acceptor for the enzyme in this species is believed to be plastoquinone. Couples the redox reaction to proton translocation, and thus conserves the redox energy in a proton gradient. In Cucumis sativus (Cucumber), this protein is NAD(P)H-quinone oxidoreductase subunit J, chloroplastic.